We begin with the raw amino-acid sequence, 226 residues long: PKHD-type hydroxylase LHK_00496 (226 aa).

Residues 78–178 (RFFPPLFNRY…RVASFMWIQS (101 aa)) form the Fe2OG dioxygenase domain. Residues histidine 96, aspartate 98, and histidine 159 each contribute to the Fe cation site. Arginine 169 contacts 2-oxoglutarate.

Fe(2+) serves as cofactor. Requires L-ascorbate as cofactor.

The polypeptide is PKHD-type hydroxylase LHK_00496 (Laribacter hongkongensis (strain HLHK9)).